The chain runs to 324 residues: Glyoxylate/hydroxypyruvate reductase B (324 aa).

Residues Arg237 and Glu266 contribute to the active site. His285 functions as the Proton donor in the catalytic mechanism.

The protein belongs to the D-isomer specific 2-hydroxyacid dehydrogenase family. GhrB subfamily. Homodimer.

Its subcellular location is the cytoplasm. It carries out the reaction glycolate + NADP(+) = glyoxylate + NADPH + H(+). The catalysed reaction is (R)-glycerate + NAD(+) = 3-hydroxypyruvate + NADH + H(+). It catalyses the reaction (R)-glycerate + NADP(+) = 3-hydroxypyruvate + NADPH + H(+). Its function is as follows. Catalyzes the NADPH-dependent reduction of glyoxylate and hydroxypyruvate into glycolate and glycerate, respectively. This is Glyoxylate/hydroxypyruvate reductase B from Escherichia coli (strain ATCC 8739 / DSM 1576 / NBRC 3972 / NCIMB 8545 / WDCM 00012 / Crooks).